The primary structure comprises 204 residues: MFLFAGLGNPGPKYAGNRHNIGFMAVDAIVRRHRLSPWRRRFQGAVSEGEIAGEKVLALLPETFMNESGRAVAEAAKFYKIPLENIFVFHDELDLPPAKIRVKKGGGNAGHNGLRSITAQCGNDYWRVRLGIGHPGDKSLVHSYVLNDFGKAEREWVEAVNTACADFAPALIGGKAEDFQNRAHLFLEAQGFTDVKPLGGARAS.

A tRNA-binding site is contributed by Tyr-14. The active-site Proton acceptor is His-19. Positions 64, 66, and 112 each coordinate tRNA.

This sequence belongs to the PTH family. As to quaternary structure, monomer.

It localises to the cytoplasm. It catalyses the reaction an N-acyl-L-alpha-aminoacyl-tRNA + H2O = an N-acyl-L-amino acid + a tRNA + H(+). Hydrolyzes ribosome-free peptidyl-tRNAs (with 1 or more amino acids incorporated), which drop off the ribosome during protein synthesis, or as a result of ribosome stalling. Functionally, catalyzes the release of premature peptidyl moieties from peptidyl-tRNA molecules trapped in stalled 50S ribosomal subunits, and thus maintains levels of free tRNAs and 50S ribosomes. This Azorhizobium caulinodans (strain ATCC 43989 / DSM 5975 / JCM 20966 / LMG 6465 / NBRC 14845 / NCIMB 13405 / ORS 571) protein is Peptidyl-tRNA hydrolase.